The chain runs to 523 residues: Katanin p60 ATPase-containing subunit A1 (523 aa).

Residues 82–215 (KEAPTGRRAA…DGKSKRGLYE (134 aa)) form a disordered region. The segment covering 178-194 (AGARSSTAGKKGAASKS) has biased composition (low complexity). Position 279–286 (279–286 (GPPGTGKT)) interacts with ATP.

This sequence belongs to the AAA ATPase family. Katanin p60 subunit A1 subfamily. May homooligomerize. Component of KTN80-KTN1 complexes composed of a hexamer of KTN1-KTN80 heterodimers that sense microtubule (MT) geometry to confer precise MT severing. Interacts directly with KTN80.1, KTN80.2, KTN80.3 and KTN80.4. Can interact with KTN80.1. May interact with the kinesin related protein KIN14A. Interacts with microtubule polymers. Binds to IPGA1. In terms of tissue distribution, expressed ubiquitously, including siliques, flowers, leaves, stems and roots.

It is found in the cytoplasm. It localises to the cytoskeleton. The catalysed reaction is n ATP + n H2O + a microtubule = n ADP + n phosphate + (n+1) alpha/beta tubulin heterodimers.. Functionally, severs microtubules in vitro in an ATP-dependent manner. Required for oligomerization of functional KTN80-KTN1 complexes that catalyze microtubule severing. This activity may promote rapid reorganization of cellular microtubule arrays. May be required for reorientation of cortical microtubule arrays during cellular elongation. Failure to correctly orient these arrays drastically compromises fiber length, cell wall thickness and mechanical strength. May also be required for the spatial organization of developmental cues within the root. Involved in the IPGA1- and AN-dependent regulation of pavement cells morphogenesis leading to puzzle shape. In Arabidopsis thaliana (Mouse-ear cress), this protein is Katanin p60 ATPase-containing subunit A1.